The primary structure comprises 324 residues: Tetrachlorobenzoquinone reductase (324 aa).

The 103-residue stretch at 5–107 (VSTIDMTVTQ…VPPANNFALV (103 aa)) folds into the FAD-binding FR-type domain. Residues 238 to 324 (FTVVLARRSG…SKSPRLVLDI (87 aa)) form the 2Fe-2S ferredoxin-type domain. Residues Cys-273, Cys-278, Cys-281, and Cys-311 each coordinate [2Fe-2S] cluster.

It belongs to the PDR/VanB family. Homotrimer. FMN is required as a cofactor. Requires [2Fe-2S] cluster as cofactor.

It carries out the reaction 2,3,5,6-tetrachlorohydroquinone + NAD(+) + H(+) = 2,3,5,6-tetrachloro-1,4-benzoquinone + NADH. The protein operates within xenobiotic degradation; pentachlorophenol degradation. In vitro, activated by tetrachlorohydroquinone (TCHQ) at low concentrations and inhibited at high concentrations (above 200 uM). However, PcpD would only be stimulated by tetrachlorohydroquinone (TCHQ) under in vivo conditions due to the toxicity of tetrachlorohydroquinone (TCHQ). Competitively inhibited by pentachlorophenol (PCP) in a concentration-dependent manner. PcpD is regulated by tetrachlorohydroquinone (TCHQ) and pentachlorophenol (PCP) using a mechanism, which maintains tetrachlorobenzoquinone at a level that would neither significantly decrease the biodegradation of pentachlorophenol (PCP) nor cause cytotoxicity in cells. In terms of biological role, involved in the degradation of the xenobiocide pentachlorophenol (PCP). Catalyzes the reduction of tetrachlorobenzoquinone (TCBQ) to yield tetrachlorohydroquinone (TCHQ). Also able to reduce 2,6-dichloroindophenol (DCIP). In Sphingobium chlorophenolicum, this protein is Tetrachlorobenzoquinone reductase.